The primary structure comprises 374 residues: Succinyl-diaminopimelate desuccinylase (374 aa).

His-66 contributes to the Zn(2+) binding site. Residue Asp-68 is part of the active site. Position 99 (Asp-99) interacts with Zn(2+). Residue Glu-133 is the Proton acceptor of the active site. Zn(2+)-binding residues include Glu-134, Glu-162, and His-348.

This sequence belongs to the peptidase M20A family. DapE subfamily. Homodimer. The cofactor is Zn(2+). Requires Co(2+) as cofactor.

It carries out the reaction N-succinyl-(2S,6S)-2,6-diaminopimelate + H2O = (2S,6S)-2,6-diaminopimelate + succinate. It participates in amino-acid biosynthesis; L-lysine biosynthesis via DAP pathway; LL-2,6-diaminopimelate from (S)-tetrahydrodipicolinate (succinylase route): step 3/3. Catalyzes the hydrolysis of N-succinyl-L,L-diaminopimelic acid (SDAP), forming succinate and LL-2,6-diaminopimelate (DAP), an intermediate involved in the bacterial biosynthesis of lysine and meso-diaminopimelic acid, an essential component of bacterial cell walls. This Coxiella burnetii (strain RSA 331 / Henzerling II) protein is Succinyl-diaminopimelate desuccinylase.